We begin with the raw amino-acid sequence, 44 residues long: Photosystem I reaction center subunit IX (44 aa).

A helical membrane pass occupies residues 7–27 (YLSTAPVLATLWFGSLAGLLI).

This sequence belongs to the PsaJ family.

The protein localises to the plastid. It is found in the chloroplast thylakoid membrane. Functionally, may help in the organization of the PsaE and PsaF subunits. This is Photosystem I reaction center subunit IX from Cycas taitungensis (Prince sago).